A 130-amino-acid polypeptide reads, in one-letter code: Small ribosomal subunit protein uS8 (130 aa).

Belongs to the universal ribosomal protein uS8 family. In terms of assembly, component of the small ribosomal subunit (SSU). Mature N.crassa ribosomes consist of a small (40S) and a large (60S) subunit. The 40S small subunit contains 1 molecule of ribosomal RNA (18S rRNA) and at least 32 different proteins. The large 60S subunit contains 3 rRNA molecules (26S, 5.8S and 5S rRNA) and at least 42 different proteins.

The protein localises to the cytoplasm. Component of the ribosome, a large ribonucleoprotein complex responsible for the synthesis of proteins in the cell. The small ribosomal subunit (SSU) binds messenger RNAs (mRNAs) and translates the encoded message by selecting cognate aminoacyl-transfer RNA (tRNA) molecules. The large subunit (LSU) contains the ribosomal catalytic site termed the peptidyl transferase center (PTC), which catalyzes the formation of peptide bonds, thereby polymerizing the amino acids delivered by tRNAs into a polypeptide chain. The nascent polypeptides leave the ribosome through a tunnel in the LSU and interact with protein factors that function in enzymatic processing, targeting, and the membrane insertion of nascent chains at the exit of the ribosomal tunnel. In Neurospora crassa (strain ATCC 24698 / 74-OR23-1A / CBS 708.71 / DSM 1257 / FGSC 987), this protein is Small ribosomal subunit protein uS8 (crp-27).